A 278-amino-acid chain; its full sequence is Neuronal membrane glycoprotein M6-a (278 aa).

N-acetylmethionine is present on Met1. The Cytoplasmic portion of the chain corresponds to 1–22; that stretch reads MEENMEEGQTQKGCFECCIKCL. The helical transmembrane segment at 23–43 threads the bilayer; sequence GGIPYASLIATILLYAGVALF. Topologically, residues 44-84 are extracellular; that stretch reads CGCGHEALSGTVNILQTYFEMARTAGDTLDVFTMIDIFKYV. Residues 85–105 traverse the membrane as a helical segment; that stretch reads IYGIAAAFFVYGILLMVEGFF. At 106–127 the chain is on the cytoplasmic side; sequence TTGAIKDLYGDFKITTCGRCVS. The chain crosses the membrane as a helical span at residues 128–148; that stretch reads AWFIMLTYLFMLAWLGVTAFT. Topologically, residues 149–213 are extracellular; sequence SLPVYMYFNV…STELNMTFHL (65 aa). Asn164 carries N-linked (GlcNAc...) asparagine glycosylation. Cysteines 174 and 192 form a disulfide. An N-linked (GlcNAc...) asparagine glycan is attached at Asn208. The chain crosses the membrane as a helical span at residues 214–234; sequence FIVALAGAGAAVIAMVHYLMV. Residues 235–278 lie on the Cytoplasmic side of the membrane; it reads LSANWAYVKDACRMQKYEDIKSKEEQELHDIHSTRSKERLNAYT. Residue Ser256 is modified to Phosphoserine. Thr278 is modified (phosphothreonine).

It belongs to the myelin proteolipid protein family. As to quaternary structure, interacts with OPRM1. Interacts with palmitoyltransferase ZDHHC17/HIP14; the interaction leads to palmitoylation of GPM6A. Post-translationally, N-glycosylated. Palmitoylated by ZDHHC17/HIP14. Expressed in hippocampus (at protein level). Isoform 1 is the predominant isoform expressed in brain, specifically in hippocampus. Isoform 2 is expressed at low levels in brain and kidney.

It is found in the cell membrane. Its subcellular location is the cell projection. The protein localises to the axon. The protein resides in the growth cone. It localises to the dendritic spine. It is found in the filopodium. Its subcellular location is the neuron projection. Functionally, involved in neuronal differentiation, including differentiation and migration of neuronal stem cells. Plays a role in neuronal plasticity and is involved in neurite and filopodia outgrowth, filopodia motility and probably synapse formation. Gpm6a-induced filopodia formation involves mitogen-activated protein kinase (MAPK) and Src signaling pathways. May be involved in neuronal NGF-dependent Ca(2+) influx. May be involved in regulation of endocytosis and intracellular trafficking of G-protein-coupled receptors (GPCRs); enhances internalization and recycling of mu-type opioid receptor. This Rattus norvegicus (Rat) protein is Neuronal membrane glycoprotein M6-a (Gpm6a).